The following is a 486-amino-acid chain: UDP-N-acetylmuramate--L-alanine ligase (486 aa).

ATP is bound at residue 129-135 (GTHGKTT).

This sequence belongs to the MurCDEF family.

It is found in the cytoplasm. It catalyses the reaction UDP-N-acetyl-alpha-D-muramate + L-alanine + ATP = UDP-N-acetyl-alpha-D-muramoyl-L-alanine + ADP + phosphate + H(+). It participates in cell wall biogenesis; peptidoglycan biosynthesis. Functionally, cell wall formation. The chain is UDP-N-acetylmuramate--L-alanine ligase from Vibrio cholerae serotype O1 (strain ATCC 39541 / Classical Ogawa 395 / O395).